The primary structure comprises 217 residues: Magnetosome protein MamA (217 aa).

6 TPR repeats span residues 12-44 (VTLY…NDDI), 46-79 (QVYY…DAFD), 80-113 (VDVA…APDN), 114-147 (VKVA…NPIN), 148-181 (FNVR…RPNE), and 182-215 (GKVH…DEGA). The interval 41–112 (NDDIRQVYYR…LERSLADAPD (72 aa)) is N-terminal domain (NTD). Positions 113 to 217 (NVKVATVLGL…ANELDEGASV (105 aa)) are C-terminal domain (CTD).

Belongs to the magnetosome MamA family. As to quaternary structure, oligomerizes into high molecular weight complexes (at least 560 kDa). Forms round, 20 nm diameter complexes with a central cavity. Interacts with full-length Mms6. Probably binds MamC.

Its subcellular location is the magnetosome membrane. In terms of biological role, probably forms a large homooligomer on which other magnetosome subunits assemble. Required for formation of functional magnetosomes from pre-existing vesicles, it has a dynamic location in the cell. The sequence is that of Magnetosome protein MamA from Paramagnetospirillum magneticum (strain ATCC 700264 / AMB-1) (Magnetospirillum magneticum).